The chain runs to 112 residues: Peptidyl-prolyl cis-trans isomerase FKBP12 (112 aa).

The interval 1 to 26 is disordered; sequence MGVEKQVIRPGNGPKPAPGQTVTVHC. Residues 19–112 form the PPIase FKBP-type domain; it reads GQTVTVHCTG…DFEIEVLSVQ (94 aa). A disulfide bridge connects residues cysteine 26 and cysteine 80.

Belongs to the FKBP-type PPIase family. As to quaternary structure, interacts with FIP37 and with the immunosuppressive drug FK506. Its interaction with FIP37 is inhibited by FK506. Interacts with TOR in a rapamycin-dependent manner.

The protein localises to the cytoplasm. The catalysed reaction is [protein]-peptidylproline (omega=180) = [protein]-peptidylproline (omega=0). In terms of biological role, PPIases accelerate the folding of proteins. It catalyzes the cis-trans isomerization of proline imidic peptide bonds in oligopeptides. Mediates rapamycin inactivation of TOR protein kinase activity. This is Peptidyl-prolyl cis-trans isomerase FKBP12 (FKBP12) from Arabidopsis thaliana (Mouse-ear cress).